Reading from the N-terminus, the 329-residue chain is RING finger protein 225 (329 aa).

Residues 1–55 (MPCPRPFWLRHSRAPQGSGPSSPGSLSAPRSPSRGEDQEEEEEEEGDGSPGSGPI) form a disordered region. A compositionally biased stretch (low complexity) spans 14–32 (APQGSGPSSPGSLSAPRSP). The segment covering 37 to 47 (DQEEEEEEEGD) has biased composition (acidic residues). The segment at 64-112 (CLICVSSFDGVFKLPKRLDCGHVFCLECLARLSLATAGGGNAVACPVCR) adopts an RING-type zinc-finger fold. The disordered stretch occupies residues 122–181 (GLPALPTQSGLLPRDARAPPSRQGSVRFDRRRGLLYLRPPPPPPGPRKARAPPPPPPLRL). The segment covering 159-179 (RPPPPPPGPRKARAPPPPPPL) has biased composition (pro residues). Residues 203–223 (ALAVLVAAGLVVSGVYIFFLI) form a helical membrane-spanning segment. The tract at residues 248-329 (FPPRPPPGSP…RGARRLWGSQ (82 aa)) is disordered. The segment covering 281-293 (DALEPEAGPEDPA) has biased composition (acidic residues). Basic and acidic residues predominate over residues 294 to 304 (EAERTLDRRSD).

It localises to the membrane. This Homo sapiens (Human) protein is RING finger protein 225.